The following is a 91-amino-acid chain: Parbolysin P6 (91 aa).

Disulfide bonds link C16–C37, C22–C33, and C47–C60.

This sequence belongs to the worm cytolysin family. Localized within the skin and proboscis and are most readily isolated from body mucus secretions.

The protein localises to the secreted. Functionally, cytolysin that shows hemolytic activity (on bovine erythrocytes, HC(50)=5.75 mg/ml). This hemolytic activity is completely inhibited by small unilamelar vesicles composed of PC/PG, PC/PI and PC/PS in 1:1 molar ratios (with at least 100 mg/ml concentration). The sequence is that of Parbolysin P6 from Parborlasia corrugatus (Antarctic nemertean worm).